The chain runs to 557 residues: Eudesmanediol synthase (557 aa).

Residues Asp310 and Asp314 each coordinate Mg(2+). Residues Asp310, Asp314, Arg450, and Asn453 each contribute to the substrate site. Residues 310–314 (DDTFD) carry the DDXXD motif motif. Mg(2+) is bound by residues Asn453 and Ser457.

Belongs to the terpene synthase family. As to quaternary structure, monomer. It depends on Mg(2+) as a cofactor. Mn(2+) serves as cofactor. As to expression, specifically expressed in roots.

It is found in the cytoplasm. It carries out the reaction (2E,6E)-farnesyl diphosphate + 2 H2O = 7-epi-ent-eudesmane-5,11-diol + diphosphate. Its pathway is secondary metabolite biosynthesis; terpenoid biosynthesis. Its function is as follows. Component of the volatile terpenes biosynthesis pathways. Dihydroxylated sesquiterpenoid synthase that generates dually hydroxylated products directly from (E,E)-farnesyl diphosphate, primarily eudesmane-2,11-diol, along with two closely related structural isomers. This chain is Eudesmanediol synthase, found in Zea mays (Maize).